Reading from the N-terminus, the 258-residue chain is Probable S-methyl-5'-thioinosine phosphorylase (258 aa).

53–54 is a binding site for phosphate; sequence RH. Methionine 180 is a binding site for substrate. A phosphate-binding site is contributed by threonine 181. 204–206 contacts substrate; that stretch reads NQA.

It belongs to the PNP/MTAP phosphorylase family. MTAP subfamily. Homotrimer.

The catalysed reaction is S-methyl-5'-thioinosine + phosphate = 5-(methylsulfanyl)-alpha-D-ribose 1-phosphate + hypoxanthine. It functions in the pathway purine metabolism; purine nucleoside salvage. Catalyzes the reversible phosphorylation of S-methyl-5'-thioinosine (MTI) to hypoxanthine and 5-methylthioribose-1-phosphate. Involved in the breakdown of S-methyl-5'-thioadenosine (MTA), a major by-product of polyamine biosynthesis. Catabolism of (MTA) occurs via deamination to MTI and phosphorolysis to hypoxanthine. The sequence is that of Probable S-methyl-5'-thioinosine phosphorylase from Methanosarcina acetivorans (strain ATCC 35395 / DSM 2834 / JCM 12185 / C2A).